The following is a 312-amino-acid chain: Transcription factor Ouib (312 aa).

The ZAD domain occupies 4-79; the sequence is IVCRVCGRQK…IKTQTKWLTI (76 aa). Zn(2+) contacts are provided by Cys-6, Cys-9, Cys-52, and Cys-55. C2H2-type zinc fingers lie at residues 167-189, 195-217, 223-245, 251-273, and 279-303; these read YICELCGTHATSKPTFQRHMRKH, FGCKDCDARFLSAGELRAHHRVH, FACRFCEKRYVSYMGRLIHERTH, YVCEECGKKFTTAYVLKNHMVIH, and FRCDICDRSFQRKAHLVTHTRSMMH.

As to expression, expressed predominantly in the prothoracic gland during embryonic and larval development.

It localises to the nucleus. Functionally, transcription factor required for ecdysteroid production in the prothoracic gland by activating transcription of the ecdysteroid biosynthesis gene spok. Binds to the 5'-AGCTTTATTATTTAG-3' DNA sequence in the spok enhancer region. In Drosophila melanogaster (Fruit fly), this protein is Transcription factor Ouib.